The chain runs to 750 residues: Eukaryotic translation initiation factor 3 subunit B (750 aa).

The 87-residue stretch at 42-128 folds into the RRM domain; it reads TFVVVDGLPE…HTLRVNKMTD (87 aa). 4 WD repeats span residues 195–234, 236–292, 309–348, and 519–562; these read DRQQ…RLRR, PHPF…PLRS, SAKF…LMDK, and LDKK…EKPE.

It belongs to the eIF-3 subunit B family. As to quaternary structure, component of the eukaryotic translation initiation factor 3 (eIF-3) complex.

It localises to the cytoplasm. RNA-binding component of the eukaryotic translation initiation factor 3 (eIF-3) complex, which is involved in protein synthesis of a specialized repertoire of mRNAs and, together with other initiation factors, stimulates binding of mRNA and methionyl-tRNAi to the 40S ribosome. The eIF-3 complex specifically targets and initiates translation of a subset of mRNAs involved in cell proliferation. The protein is Eukaryotic translation initiation factor 3 subunit B of Chaetomium globosum (strain ATCC 6205 / CBS 148.51 / DSM 1962 / NBRC 6347 / NRRL 1970) (Soil fungus).